The following is a 195-amino-acid chain: Pyruvoyl-dependent arginine decarboxylase AaxB (195 aa).

At Ser53 the chain carries Pyruvic acid (Ser).

The protein belongs to the pyruvoyl-dependent arginine decarboxylase family. Trimer of an alpha-beta dimer. The cofactor is pyruvate.

Its subcellular location is the cytoplasm. It carries out the reaction L-arginine + H(+) = agmatine + CO2. Its function is as follows. Part of the AaxABC system, catalyzes the decarboxylation of L-arginine. The arginine uptake by the bacterium in the macrophage may be a virulence factor against the host innate immune response. This is Pyruvoyl-dependent arginine decarboxylase AaxB (aaxB) from Chlamydia caviae (strain ATCC VR-813 / DSM 19441 / 03DC25 / GPIC) (Chlamydophila caviae).